The sequence spans 386 residues: Succinate--CoA ligase [ADP-forming] subunit beta (386 aa).

The ATP-grasp domain occupies 9-244 (KAVLRSYGVS…LDEEDSKEIE (236 aa)). ATP-binding positions include lysine 46, 53-55 (GRG), glutamate 99, cysteine 102, and glutamate 107. 2 residues coordinate Mg(2+): asparagine 199 and aspartate 213. Substrate contacts are provided by residues asparagine 264 and 321–323 (GIM).

Belongs to the succinate/malate CoA ligase beta subunit family. As to quaternary structure, heterotetramer of two alpha and two beta subunits. Mg(2+) serves as cofactor.

It carries out the reaction succinate + ATP + CoA = succinyl-CoA + ADP + phosphate. It catalyses the reaction GTP + succinate + CoA = succinyl-CoA + GDP + phosphate. Its pathway is carbohydrate metabolism; tricarboxylic acid cycle; succinate from succinyl-CoA (ligase route): step 1/1. Succinyl-CoA synthetase functions in the citric acid cycle (TCA), coupling the hydrolysis of succinyl-CoA to the synthesis of either ATP or GTP and thus represents the only step of substrate-level phosphorylation in the TCA. The beta subunit provides nucleotide specificity of the enzyme and binds the substrate succinate, while the binding sites for coenzyme A and phosphate are found in the alpha subunit. The sequence is that of Succinate--CoA ligase [ADP-forming] subunit beta from Bacillus cereus (strain ATCC 14579 / DSM 31 / CCUG 7414 / JCM 2152 / NBRC 15305 / NCIMB 9373 / NCTC 2599 / NRRL B-3711).